Consider the following 205-residue polypeptide: Probable nicotinate-nucleotide adenylyltransferase (205 aa).

The protein belongs to the NadD family.

The catalysed reaction is nicotinate beta-D-ribonucleotide + ATP + H(+) = deamido-NAD(+) + diphosphate. It functions in the pathway cofactor biosynthesis; NAD(+) biosynthesis; deamido-NAD(+) from nicotinate D-ribonucleotide: step 1/1. Its function is as follows. Catalyzes the reversible adenylation of nicotinate mononucleotide (NaMN) to nicotinic acid adenine dinucleotide (NaAD). This is Probable nicotinate-nucleotide adenylyltransferase from Nocardioides sp. (strain ATCC BAA-499 / JS614).